The sequence spans 200 residues: Recombination protein RecR (200 aa).

The segment at 59-74 adopts a C4-type zinc-finger fold; that stretch reads CGTCGSLDVTDPCAVC. The Toprim domain occupies 82-177; the sequence is RLLCVVEEVG…PVTMLARGVP (96 aa).

It belongs to the RecR family.

Functionally, may play a role in DNA repair. It seems to be involved in an RecBC-independent recombinational process of DNA repair. It may act with RecF and RecO. The protein is Recombination protein RecR of Caulobacter vibrioides (strain ATCC 19089 / CIP 103742 / CB 15) (Caulobacter crescentus).